The following is a 365-amino-acid chain: SWR1 complex subunit 2 (365 aa).

2 disordered regions span residues 43-83 and 95-147; these read ALKE…NEKE and PGKT…EGEK. Over residues 48 to 74 the composition is skewed to acidic residues; it reads EHDDEYEAEREVADEFDSDFNDDEPEP. Basic residues predominate over residues 99-108; that stretch reads ASKKKKKKTK. Residues 118–132 show a composition bias toward basic and acidic residues; the sequence is GDEKPGEELGNKEQE. 2 coiled-coil regions span residues 123–150 and 184–225; these read GEEL…KVIR and GEEK…KAIV. Acidic residues predominate over residues 133–144; the sequence is EKEENEAQEDME. A disordered region spans residues 333-365; sequence RTKIPKSNKSFSLRSSARFLSSESEEESEEDSD. Over residues 342 to 354 the composition is skewed to low complexity; sequence SFSLRSSARFLSS. The segment covering 355–365 has biased composition (acidic residues); the sequence is ESEEESEEDSD.

It belongs to the VPS72/YL1 family. In terms of assembly, component of the SWR1 chromatin-remodeling complex composed of at least ARP6/ESD1/SUF3, PIE1, SWC6, SWC2 and H2AZs (HTA8, HTA9, HTA11). Interacts directly with SWC6 and H2AZs, but not with ARP6.

Functionally, component of the SWR1 complex which mediates the ATP-dependent exchange of histone H2A for the H2A variant H2A.F/Z leading to transcriptional regulation of selected genes (e.g. FLC) by chromatin remodeling. In Arabidopsis thaliana (Mouse-ear cress), this protein is SWR1 complex subunit 2 (SWC2).